Here is a 439-residue protein sequence, read N- to C-terminus: MSYIPHSEEETKEILSKLGLESLEDLFSHIPKELFAKDFSFPEPKSEEELRRIFERACEDTELPLYFIGAGAYDRIIPSVIWQILSRGEFLTPYTPYQAEASQGTLQAIFEYQSLICELTGMDVANASMYDGASALAEAVLMARAIKGKGDTVVLSKALNPLYRRTVKTYLRGYEDKIVEVPYTEEGTTDLNNLEEVLKESEVHALAVQYPNFFGFVEPLKEIGELCKKYEVPFVVFVDPIALSILKPPAEFGADIVVGEGQQMGIPLSFGGPYVGFFATKKEHVRKMPGRLVGMGEDIEGKRAFTLVLQTREQHIRRERATSNICTNQNLMALANLLYMVLLGKEGMKKVAVQSLSKALYFKKELMKKGFEEVFTGKHLWEFPLRHESLKAIYRKLLKEKIVLGLPLDRFYEDLKNTTLIAVTEKRTKEEIDSVLALL.

This sequence belongs to the GcvP family. N-terminal subunit subfamily. In terms of assembly, the glycine cleavage system is composed of four proteins: P, T, L and H. In this organism, the P 'protein' is a heterodimer of two subunits.

It catalyses the reaction N(6)-[(R)-lipoyl]-L-lysyl-[glycine-cleavage complex H protein] + glycine + H(+) = N(6)-[(R)-S(8)-aminomethyldihydrolipoyl]-L-lysyl-[glycine-cleavage complex H protein] + CO2. Its function is as follows. The glycine cleavage system catalyzes the degradation of glycine. The P protein binds the alpha-amino group of glycine through its pyridoxal phosphate cofactor; CO(2) is released and the remaining methylamine moiety is then transferred to the lipoamide cofactor of the H protein. This is Probable glycine dehydrogenase (decarboxylating) subunit 1 from Aquifex aeolicus (strain VF5).